We begin with the raw amino-acid sequence, 391 residues long: Processive diacylglycerol beta-glucosyltransferase (391 aa).

The protein belongs to the glycosyltransferase 28 family. UgtP subfamily.

Its subcellular location is the cell membrane. The catalysed reaction is a 1,2-diacyl-3-O-(beta-D-glucopyranosyl)-sn-glycerol + UDP-alpha-D-glucose = a 1,2-diacyl-3-O-(beta-D-Glc-(1-&gt;6)-beta-D-Glc)-sn-glycerol + UDP + H(+). It carries out the reaction a 1,2-diacyl-sn-glycerol + UDP-alpha-D-glucose = a 1,2-diacyl-3-O-(beta-D-glucopyranosyl)-sn-glycerol + UDP + H(+). Its pathway is glycolipid metabolism; diglucosyl-diacylglycerol biosynthesis. Processive glucosyltransferase involved in the biosynthesis of both the bilayer- and non-bilayer-forming membrane glucolipids. Is able to successively transfer two glucosyl residues to diacylglycerol (DAG), thereby catalyzing the formation of beta-monoglucosyl-DAG (3-O-(beta-D-glucopyranosyl)-1,2-diacyl-sn-glycerol) and beta-diglucosyl-DAG (3-O-(beta-D-glucopyranosyl-beta-(1-&gt;6)-D-glucopyranosyl)-1,2-diacyl-sn-glycerol). Beta-diglucosyl-DAG is the predominant glycolipid found in Bacillales and is also used as a membrane anchor for lipoteichoic acid (LTA). This Staphylococcus epidermidis (strain ATCC 35984 / DSM 28319 / BCRC 17069 / CCUG 31568 / BM 3577 / RP62A) protein is Processive diacylglycerol beta-glucosyltransferase.